A 372-amino-acid polypeptide reads, in one-letter code: Glutamate 5-kinase (372 aa).

Lysine 14 contributes to the ATP binding site. 3 residues coordinate substrate: serine 54, aspartate 141, and asparagine 153. 173 to 174 (TD) is an ATP binding site. One can recognise a PUA domain in the interval 280-358 (AGRIVLDQGA…TDILSILGFV (79 aa)).

Belongs to the glutamate 5-kinase family.

It localises to the cytoplasm. The enzyme catalyses L-glutamate + ATP = L-glutamyl 5-phosphate + ADP. It functions in the pathway amino-acid biosynthesis; L-proline biosynthesis; L-glutamate 5-semialdehyde from L-glutamate: step 1/2. Its function is as follows. Catalyzes the transfer of a phosphate group to glutamate to form L-glutamate 5-phosphate. This Herminiimonas arsenicoxydans protein is Glutamate 5-kinase.